Reading from the N-terminus, the 25-residue chain is Caerin-1.2 (25 aa).

L25 carries the leucine amide modification.

In terms of tissue distribution, expressed by the skin parotoid and/or rostral glands.

The protein localises to the secreted. Its function is as follows. Antibacterial peptide, that adopts an alpha helical conformation which can disrupt bacterial membranes. Each caerin displays a different antimicrobial specificity. In Ranoidea caerulea (Green tree frog), this protein is Caerin-1.2.